Consider the following 339-residue polypeptide: Tetracenomycin polyketide synthesis 8-O-methyl transferase TcmO (339 aa).

S-adenosyl-L-methionine contacts are provided by residues aspartate 200 and 226-228 (GDF). Histidine 246 serves as the catalytic Proton acceptor.

This sequence belongs to the class I-like SAM-binding methyltransferase superfamily. Cation-independent O-methyltransferase family.

It participates in antibiotic biosynthesis; tetracenomycin C biosynthesis. In Streptomyces glaucescens, this protein is Tetracenomycin polyketide synthesis 8-O-methyl transferase TcmO (tcmO).